Consider the following 23-residue polypeptide: GLKDIFKAGLGSLVKNIAAHVAN.

Asn-23 is subject to Asparagine amide.

Expressed by the skin glands.

Its subcellular location is the secreted. The protein resides in the target cell membrane. Antibacterial peptide with amphipathic alpha-helical structure. Shows selective growth inhibitory activity against the Gram-negative bacteria E.coli (MIC=25 uM) Has a weak hemolytic activity against human erythrocytes (LC(50)&gt;100 uM). Is very weakly active against S.aureus (MIC=200 uM). In Alytes obstetricans (Common midwife toad), this protein is Alyteserin-1d.